Reading from the N-terminus, the 151-residue chain is Arginine repressor (151 aa).

It belongs to the ArgR family. Homohexamer.

The protein localises to the cytoplasm. It participates in amino-acid biosynthesis; L-arginine biosynthesis [regulation]. Its function is as follows. Regulates arginine biosynthesis genes. The protein is Arginine repressor (argR) of Haemophilus influenzae (strain ATCC 51907 / DSM 11121 / KW20 / Rd).